A 951-amino-acid chain; its full sequence is Cadmium/zinc-transporting ATPase HMA2 (951 aa).

At 1–83 (MASKKMTKSY…VRVTGETNFK (83 aa)) the chain is on the cytoplasmic side. The region spanning 7 to 73 (TKSYFDVLGI…ALNQAQLEAN (67 aa)) is the HMA domain. The chain crosses the membrane as a helical span at residues 84–105 (NKWPSPFAVVSGILLLLSFFKY). Residues 106 to 108 (LYS) lie on the Extracellular side of the membrane. A helical membrane pass occupies residues 109–128 (PFRWLAVAAVVAGIYPILAK). The Cytoplasmic portion of the chain corresponds to 129-135 (AVASLAR). A helical transmembrane segment spans residues 136–156 (FRIDINILVVVTVGATIGMQD). Tyr157 is a topological domain (extracellular). Residues 158-178 (TEAAVVVFLFTIAEWLQSRAS) traverse the membrane as a helical segment. Over 179-304 (YKASAVMQSL…KTETQRFIDK (126 aa)) the chain is Cytoplasmic. A helical membrane pass occupies residues 305 to 327 (CSKYYTPAIILISICFVAIPFAL). Topologically, residues 328–335 (KVHNLKHW) are extracellular. A helical membrane pass occupies residues 336-353 (VHLALVVLVSACPCGLIL). The Cytoplasmic portion of the chain corresponds to 354-647 (STPVATFCAL…KLAKRAKRKV (294 aa)). The active-site 4-aspartylphosphate intermediate is Asp391. Mg(2+)-binding residues include Asp592 and Asp596. A helical transmembrane segment spans residues 648–667 (VENVVISITMKGAILALAFA). Residues 668–671 (GHPL) are Extracellular-facing. A helical transmembrane segment spans residues 672–691 (IWAAVLADVGTCLLVILNSM). Over 692–951 (LLLSDKHKTG…VGTLKEIVIE (260 aa)) the chain is Cytoplasmic. Positions 841 to 851 (ELQQSCHDKPS) are enriched in basic and acidic residues. The interval 841 to 866 (ELQQSCHDKPSGLDIGTGPKHEGSST) is disordered.

The protein belongs to the cation transport ATPase (P-type) (TC 3.A.3) family. Type IB subfamily. As to expression, predominantly expressed in the vascular tissues of roots, stems, and leaves. Also detected in developing anthers.

The protein resides in the cell membrane. The catalysed reaction is Zn(2+)(in) + ATP + H2O = Zn(2+)(out) + ADP + phosphate + H(+). The enzyme catalyses Cd(2+)(in) + ATP + H2O = Cd(2+)(out) + ADP + phosphate + H(+). Functionally, plays an important role in zinc transport and homeostasis. Could also be involved in cadmium detoxification. The protein is Cadmium/zinc-transporting ATPase HMA2 (HMA2) of Arabidopsis thaliana (Mouse-ear cress).